Reading from the N-terminus, the 345-residue chain is KRR1 small subunit processome component homolog (345 aa).

The KH domain maps to 125–193 (DIIKIGNLVH…VRDIVLETMN (69 aa)). Over residues 232–245 (NISKRKQPKVKKQK) the composition is skewed to basic residues. 2 disordered regions span residues 232–260 (NISK…ESKV) and 273–345 (QEQK…ARSS). Residues 270–298 (FLNQEQKQAKRNQERTEKQKEAAKRQDER) are a coiled coil. 2 stretches are compositionally biased toward basic and acidic residues: residues 276 to 302 (KQAK…RNKD) and 315 to 330 (RKKE…DVKA). Basic residues predominate over residues 331-345 (LKAKLIKANKKARSS).

The protein belongs to the KRR1 family. In terms of assembly, monomer. Component of the ribosomal small subunit (SSU) processome.

It localises to the nucleus. Its subcellular location is the nucleolus. Functionally, required for 40S ribosome biogenesis. Involved in nucleolar processing of pre-18S ribosomal RNA and ribosome assembly. Binds to RNA. Required for female germline development, cell viability during eye development and for survival of dividing cells and epithelial cells during early wing disk development. This is KRR1 small subunit processome component homolog (dbe) from Drosophila melanogaster (Fruit fly).